The sequence spans 124 residues: Small ribosomal subunit protein uS13 (124 aa).

Over residues 103–117 (KCNARTRKGPRKTVA) the composition is skewed to basic residues. A disordered region spans residues 103–124 (KCNARTRKGPRKTVANKKIETK).

Belongs to the universal ribosomal protein uS13 family. Part of the 30S ribosomal subunit. Forms a loose heterodimer with protein S19. Forms two bridges to the 50S subunit in the 70S ribosome.

Functionally, located at the top of the head of the 30S subunit, it contacts several helices of the 16S rRNA. In the 70S ribosome it contacts the 23S rRNA (bridge B1a) and protein L5 of the 50S subunit (bridge B1b), connecting the 2 subunits; these bridges are implicated in subunit movement. Contacts the tRNAs in the A and P-sites. This is Small ribosomal subunit protein uS13 from Malacoplasma penetrans (strain HF-2) (Mycoplasma penetrans).